The primary structure comprises 384 residues: Protein cutoff (384 aa).

The protein belongs to the DXO/Dom3Z family. Component of the Rhino-Deadlock-Cutoff (RDC) complex, composed of rhi/rhino, del/deadlock and cuff/cutoff. Interacts with rhi/rhino; this interaction is indirect and is mediated by del/deadlock. Interacts with del/deadlock (via C-terminal); this interaction is direct. Interacts with Rat1.

It is found in the cytoplasm. It localises to the nucleus. The protein resides in the chromosome. Involved in the piRNA pathway in germline tissues. Part of the Rhino-Deadlock-Cutoff (RDC) complex that stimulates piRNA biogenesis from chromatin regions corresponding to dual-strand, but not single-stranded, piRNA clusters. Promotes transcription of long piRNA precursors by preventing termination at canonical poly(A) sites. As part of the RDC complex, is recruited to chromatin enriched in histone modification H3K9me3 and might contribute to complex interaction by binding nascent transcript nucleic acid chains. Associates with chromatin upon exposure to homologous piRNA. Suppresses cleavage at canonical poly(A) sites by blocking recruitment of the cleavage and polyadenylation specificity factor (CPSF) complex and prevents transcriptional termination by RNA polymerase II, facilitating transcriptional read-through. As part of the RDC complex, involved in suppression of splicing. Catalytically inactive, lacking 5'-3' exonuclease and pyrophosphohydrolase activities. Stabilizes uncapped piRNA precursors in the nucleus, probably by sequestering or blocking the exonuclease activity of Rat1. May also be involved in siRNA biogenesis from dual-strand piRNA clusters. This chain is Protein cutoff (cuff), found in Drosophila melanogaster (Fruit fly).